We begin with the raw amino-acid sequence, 343 residues long: Palmitoyltransferase ZDHHC4 (343 aa).

Topologically, residues 1 to 2 are lumenal; the sequence is MD. Residues 3-23 traverse the membrane as a helical segment; it reads FLVLFLFYLAFLLICVVLICI. Residues 24–67 lie on the Cytoplasmic side of the membrane; it reads FTKSQRLKAVVLGGAQVCSRVIPQCLQRAVQTLLHQLFHTRHPT. A helical transmembrane segment spans residues 68 to 88; that stretch reads FIVLHLLLQGLVYAEYTCEVF. The Lumenal portion of the chain corresponds to 89–100; that stretch reads GYCRELEFSLPY. A helical transmembrane segment spans residues 101–121; sequence LLLPYVLLSVNLVFFTLTCAA. At 122–193 the chain is on the cytoplasmic side; sequence NPGTITKANE…NCIGAWNTRY (72 aa). Residues 149–199 enclose the DHHC domain; sequence SRCPTCDLRKPARSKHCRLCDRCVHRFDHHCVWVNNCIGAWNTRYFLIYLL. The S-palmitoyl cysteine intermediate role is filled by C179. A helical transmembrane segment spans residues 194–214; that stretch reads FLIYLLTLTASAATIATVTAA. The Lumenal portion of the chain corresponds to 215–255; the sequence is FLLRLVTVSDLYQETYLDDVGHFQAVDTVFLIQHLFLAFPR. Residues 256 to 276 form a helical membrane-spanning segment; sequence IVFLLGFVIVLSMLLAGYLCF. Over 277 to 343 the chain is Cytoplasmic; the sequence is ALYLAATNQT…ATPSYKKKEK (67 aa). The short motif at 340 to 343 is the Di-lysine motif element; that stretch reads KKEK.

This sequence belongs to the DHHC palmitoyltransferase family. Interacts with CPT1A.

It localises to the endoplasmic reticulum membrane. It is found in the golgi apparatus membrane. The protein localises to the cell membrane. The enzyme catalyses L-cysteinyl-[protein] + hexadecanoyl-CoA = S-hexadecanoyl-L-cysteinyl-[protein] + CoA. In terms of biological role, palmitoyltransferase that could catalyze the addition of palmitate onto protein substrates including the D(2) dopamine receptor DRD2, GSK3B or MAVS. Mediates GSK3B palmitoylation to prevent its AKT1-mediated phosphorylation leading to activation of the STAT3 signaling pathway. Also catalyzes MAVS palmitoylation which promotes its stabilization and activation by inhibiting 'Lys-48'- but facilitating 'Lys-63'-linked ubiquitination. This is Palmitoyltransferase ZDHHC4 from Mus musculus (Mouse).